The chain runs to 286 residues: Light-independent protochlorophyllide reductase iron-sulfur ATP-binding protein (286 aa).

Residues 10–15 (GIGKST) and Lys39 each bind ATP. Ser14 is a Mg(2+) binding site. Cys95 and Cys129 together coordinate [4Fe-4S] cluster. Position 180 to 181 (180 to 181 (NR)) interacts with ATP.

It belongs to the NifH/BchL/ChlL family. Homodimer. Protochlorophyllide reductase is composed of three subunits; ChlL, ChlN and ChlB. It depends on [4Fe-4S] cluster as a cofactor.

The catalysed reaction is chlorophyllide a + oxidized 2[4Fe-4S]-[ferredoxin] + 2 ADP + 2 phosphate = protochlorophyllide a + reduced 2[4Fe-4S]-[ferredoxin] + 2 ATP + 2 H2O. The protein operates within porphyrin-containing compound metabolism; chlorophyll biosynthesis (light-independent). In terms of biological role, component of the dark-operative protochlorophyllide reductase (DPOR) that uses Mg-ATP and reduced ferredoxin to reduce ring D of protochlorophyllide (Pchlide) to form chlorophyllide a (Chlide). This reaction is light-independent. The L component serves as a unique electron donor to the NB-component of the complex, and binds Mg-ATP. This is Light-independent protochlorophyllide reductase iron-sulfur ATP-binding protein from Leptolyngbya boryana (Plectonema boryanum).